A 65-amino-acid chain; its full sequence is MPKMKTNKSAQKRFKKTGSGRFKCKQSHLRHILTKKSTKRKRHLRAASMIHDNDVAMVRRMLPYA.

The disordered stretch occupies residues 1-26 (MPKMKTNKSAQKRFKKTGSGRFKCKQ). A compositionally biased stretch (basic residues) spans 10–26 (AQKRFKKTGSGRFKCKQ).

Belongs to the bacterial ribosomal protein bL35 family.

This chain is Large ribosomal subunit protein bL35, found in Hydrogenovibrio crunogenus (strain DSM 25203 / XCL-2) (Thiomicrospira crunogena).